Consider the following 497-residue polypeptide: Cytochrome P450 76AD1 (497 aa).

A helical membrane pass occupies residues Ala-4 to Phe-24. Cys-439 serves as a coordination point for heme.

It belongs to the cytochrome P450 family. Requires heme as cofactor.

The protein localises to the membrane. The protein operates within pigment biosynthesis; betalain biosynthesis. In terms of biological role, converts L-DOPA to cyclo-DOPA in the betalain pathway. Provides the cyclo-DOPA moiety of all red betacyanins. The chain is Cytochrome P450 76AD1 from Beta vulgaris (Sugar beet).